An 82-amino-acid chain; its full sequence is Cytochrome b559 subunit alpha (82 aa).

A helical membrane pass occupies residues 21–35 (VIHSVTIPSLFIAGW). H23 contacts heme.

The protein belongs to the PsbE/PsbF family. As to quaternary structure, heterodimer of an alpha subunit and a beta subunit. PSII is composed of 1 copy each of membrane proteins PsbA, PsbB, PsbC, PsbD, PsbE, PsbF, PsbH, PsbI, PsbJ, PsbK, PsbL, PsbM, PsbT, PsbX, PsbY, PsbZ, Psb30/Ycf12, at least 3 peripheral proteins of the oxygen-evolving complex and a large number of cofactors. It forms dimeric complexes. Heme b is required as a cofactor.

The protein resides in the plastid. Its subcellular location is the chloroplast thylakoid membrane. In terms of biological role, this b-type cytochrome is tightly associated with the reaction center of photosystem II (PSII). PSII is a light-driven water:plastoquinone oxidoreductase that uses light energy to abstract electrons from H(2)O, generating O(2) and a proton gradient subsequently used for ATP formation. It consists of a core antenna complex that captures photons, and an electron transfer chain that converts photonic excitation into a charge separation. In Ostreococcus tauri, this protein is Cytochrome b559 subunit alpha.